The sequence spans 393 residues: Ceramide synthase 4 (393 aa).

Over 1-31 (MWSSLNDWLWNERLWLPANISWAQLEDHDGL) the chain is Lumenal. Asn-19 carries N-linked (GlcNAc...) asparagine glycosylation. A helical transmembrane segment spans residues 32–52 (VFPHPQDTLMAVPLALALVVV). Residues 67 to 128 (WLGVRNQIRR…RRRRNQDRPC (62 aa)) form a homeobox-like region. The region spanning 131 to 332 (KKFCESSWKF…ILCMIYSFIK (202 aa)) is the TLC domain. 4 helical membrane passes run 140 to 160 (FVFYLCCFVCGTMVLYHESWL), 179 to 199 (LYHWYLLELSFYISLLMTLPF), 209 to 229 (QVIHHFVTIILISFSYSLNLL), and 260 to 280 (MCDTLFIIFSLVFFYTRLVLF). Residues 291–301 (ESIGNFSPFFG) carry the Last loop motif motif. Residues 304–324 (FLNILLVILQLLHVFWSWLIL) traverse the membrane as a helical segment. Topologically, residues 325-393 (CMIYSFIKKG…RMVNRHTPAT (69 aa)) are cytoplasmic. Residues Ser-342, Ser-349, and Ser-350 each carry the phosphoserine modification. Positions 346–356 (ELDSSDGEAAE) are enriched in acidic residues. Residues 346-393 (ELDSSDGEAAEECPQMKNGAAQRPGAAPTDGPRSRAAGRMVNRHTPAT) form a disordered region.

Phosphorylated at the C-terminus by CK2.

Its subcellular location is the endoplasmic reticulum membrane. The catalysed reaction is sphinganine + octadecanoyl-CoA = N-(octadecanoyl)-sphinganine + CoA + H(+). It catalyses the reaction eicosanoyl-CoA + sphinganine = N-eicosanoylsphinganine + CoA + H(+). The enzyme catalyses docosanoyl-CoA + sphinganine = N-docosanoylsphinganine + CoA + H(+). It carries out the reaction tetracosanoyl-CoA + sphinganine = N-tetracosanoylsphinganine + CoA + H(+). The catalysed reaction is hexacosanoyl-CoA + sphinganine = N-hexacosanoylsphinganine + CoA + H(+). It catalyses the reaction a fatty acyl-CoA + sphing-4-enine = an N-acylsphing-4-enine + CoA + H(+). The enzyme catalyses sphing-4-enine + octadecanoyl-CoA = N-octadecanoylsphing-4-enine + CoA + H(+). It carries out the reaction hexadecasphinganine + octadecanoyl-CoA = N-octadecanoylhexadecasphinganine + CoA + H(+). It participates in lipid metabolism; sphingolipid metabolism. Ceramide synthase that catalyzes formation of ceramide from sphinganine and acyl-CoA substrates, with high selectivity toward long and very-long chains (C18:0-C22:0) as acyl donor. This is Ceramide synthase 4 from Bos taurus (Bovine).